Reading from the N-terminus, the 856-residue chain is Cyclic di-GMP phosphodiesterase PdeB (856 aa).

The next 2 helical transmembrane spans lie at 7 to 27 (ILVF…YCLG) and 230 to 250 (WVSL…YVWL). A PAS domain is found at 303–350 (QKERGKITLESIAEAVILTDIEAKVIYMNPKAETLLEVASSNAVGESL). Residues 454–587 (RSLAVCYLDL…GTNQIHIYDD (134 aa)) form the GGDEF domain. The region spanning 598–852 (APKWAVRIAQ…SYCEQFETRL (255 aa)) is the EAL domain.

It is found in the cell membrane. The catalysed reaction is 3',3'-c-di-GMP + H2O = 5'-phosphoguanylyl(3'-&gt;5')guanosine + H(+). Its function is as follows. Affects motility and biofilm formation, and is linked to the regulation of sulfate uptake and assimilation. This is Cyclic di-GMP phosphodiesterase PdeB (pdeB) from Shewanella oneidensis (strain ATCC 700550 / JCM 31522 / CIP 106686 / LMG 19005 / NCIMB 14063 / MR-1).